A 369-amino-acid polypeptide reads, in one-letter code: Homoserine O-succinyltransferase (369 aa).

The region spanning 49-328 is the AB hydrolase-1 domain; that stretch reads NAVFICHALT…RFDSTQSARM (280 aa). The Nucleophile role is filled by Ser-154. Arg-224 lines the substrate pocket. Residues Asp-317 and His-350 contribute to the active site. Residue Asp-351 participates in substrate binding.

It belongs to the AB hydrolase superfamily. MetX family. In terms of assembly, homodimer.

It localises to the cytoplasm. It catalyses the reaction L-homoserine + succinyl-CoA = O-succinyl-L-homoserine + CoA. It participates in amino-acid biosynthesis; L-methionine biosynthesis via de novo pathway; O-succinyl-L-homoserine from L-homoserine: step 1/1. Functionally, transfers a succinyl group from succinyl-CoA to L-homoserine, forming succinyl-L-homoserine. This Nocardioides sp. (strain ATCC BAA-499 / JS614) protein is Homoserine O-succinyltransferase.